A 1955-amino-acid polypeptide reads, in one-letter code: Rootletin (1955 aa).

Coiled-coil stretches lie at residues 29–58 (EENR…ESIE), 162–223 (EENL…QQHT), 284–1303 (LMRK…AVES), 1368–1579 (VGVT…EELR), and 1607–1863 (RRWE…RTKG). 5 disordered regions span residues 321 to 341 (VTEN…DLKR), 391 to 451 (LTTK…KKLD), 504 to 551 (LKER…RSLK), 907 to 935 (EKLN…NEAV), and 961 to 998 (RDLE…QKTL). Basic and acidic residues-rich tracts occupy residues 326 to 341 (MKSE…DLKR) and 396 to 451 (GEID…KKLD). 3 stretches are compositionally biased toward basic and acidic residues: residues 907 to 931 (EKLN…ESSK), 961 to 982 (RDLE…KMEL), and 989 to 998 (EDRKKEQKTL).

It belongs to the rootletin family. As to expression, expressed in head ciliated neurons.

Its subcellular location is the cytoplasm. The protein localises to the cytoskeleton. It localises to the cilium basal body. The protein resides in the cilium axoneme. In terms of biological role, major structural component of the ciliary rootlet, a cytoskeletal-like structure in ciliated cells which originates from the basal body at the proximal end of a cilium and extends proximally toward the cell nucleus. Required for cilia integrity and function in sensory neurons. Maintains cilia integrity, partly by modulating the assembly and transport of intraflagellar proteins along the ciliary axoneme. Required for normal mating behavior and normal responses to environmental and chemical stimuli. This is Rootletin from Caenorhabditis elegans.